The sequence spans 505 residues: AMP phosphorylase (505 aa).

AMP-binding positions include Gly-170, 196-201 (SRAITS), and Thr-205. Residue Asp-258 is the Proton donor of the active site. AMP contacts are provided by Ser-266 and Lys-290.

This sequence belongs to the thymidine/pyrimidine-nucleoside phosphorylase family. Type 2 subfamily.

The enzyme catalyses AMP + phosphate = alpha-D-ribose 1,5-bisphosphate + adenine. The catalysed reaction is CMP + phosphate = cytosine + alpha-D-ribose 1,5-bisphosphate. It carries out the reaction UMP + phosphate = alpha-D-ribose 1,5-bisphosphate + uracil. Functionally, catalyzes the conversion of AMP and phosphate to adenine and ribose 1,5-bisphosphate (R15P). Exhibits phosphorylase activity toward CMP and UMP in addition to AMP. Functions in an archaeal AMP degradation pathway, together with R15P isomerase and RubisCO. This chain is AMP phosphorylase, found in Methanococcus maripaludis (strain C7 / ATCC BAA-1331).